We begin with the raw amino-acid sequence, 203 residues long: Endo-type membrane-bound lytic murein transglycosylase A (203 aa).

The N-terminal stretch at 1–15 (MKLRWFAFLIVLLAG) is a signal peptide. A lipid anchor (N-palmitoyl cysteine) is attached at Cys16. Cys16 carries S-diacylglycerol cysteine lipidation.

The protein belongs to the transglycosylase Slt family.

It localises to the cell outer membrane. The catalysed reaction is Endolytic cleavage of the (1-&gt;4)-beta-glycosidic linkage between N-acetylmuramic acid (MurNAc) and N-acetylglucosamine (GlcNAc) residues in peptidoglycan with concomitant formation of a 1,6-anhydrobond in the MurNAc residue.. Murein-degrading enzyme. May play a role in recycling of muropeptides during cell elongation and/or cell division. Preferentially cleaves at a distance of more than two disaccharide units from the ends of the glycan chain. The polypeptide is Endo-type membrane-bound lytic murein transglycosylase A (Escherichia coli (strain K12 / MC4100 / BW2952)).